Consider the following 619-residue polypeptide: Chaperone protein HscA homolog (619 aa).

This sequence belongs to the heat shock protein 70 family.

In terms of biological role, chaperone involved in the maturation of iron-sulfur cluster-containing proteins. Has a low intrinsic ATPase activity which is markedly stimulated by HscB. The chain is Chaperone protein HscA homolog from Haemophilus influenzae (strain PittGG).